A 172-amino-acid chain; its full sequence is LSM1-LSM7 complex subunit LSM1 (172 aa).

Positions 1 to 17 are enriched in basic and acidic residues; that stretch reads MSANSKDRNQSNQDAKR. The segment at 1–22 is disordered; sequence MSANSKDRNQSNQDAKRQQQNF. One can recognise a Sm domain in the interval 41–118; sequence TTTAAIVSSV…VVMLGEVDID (78 aa).

Belongs to the snRNP Sm proteins family. In terms of assembly, component of the heptameric LSM1-LSM7 complex that forms a seven-membered ring structure with a donut shape. The LSm subunits are arranged in the order LSM1, LSM2, LSM3, LSM6, LSM5, LSM7 and LSM4. Except for LSM1, where a C-terminal helix crosses the ring structure to form additional interactions with LSM3 and LSM6, each subunit interacts only with its two neighboring subunits. The LSM1-LSM7 complex interacts with PAT1; within the complex PAT1 has direct interactions with LSM2 and LSM3. The LSM1-LSM7 complex interacts with XRN1.

The protein resides in the nucleus. The protein localises to the cytoplasm. It is found in the P-body. Functionally, component of the cytoplasmic LSM1-LSM7 complex which is involved in mRNA degradation by activating the decapping step. Together with PAT1, the LSM1-LSM7 complex binds to osmotic stress-activated mRNAs to attenuate the osmotic stress response, probably by limiting ribosome access to the mRNA and consequently translation. The protein is LSM1-LSM7 complex subunit LSM1 (LSM1) of Saccharomyces cerevisiae (strain ATCC 204508 / S288c) (Baker's yeast).